Consider the following 110-residue polypeptide: Large ribosomal subunit protein uL22 (110 aa).

It belongs to the universal ribosomal protein uL22 family. Part of the 50S ribosomal subunit.

This protein binds specifically to 23S rRNA; its binding is stimulated by other ribosomal proteins, e.g. L4, L17, and L20. It is important during the early stages of 50S assembly. It makes multiple contacts with different domains of the 23S rRNA in the assembled 50S subunit and ribosome. Functionally, the globular domain of the protein is located near the polypeptide exit tunnel on the outside of the subunit, while an extended beta-hairpin is found that lines the wall of the exit tunnel in the center of the 70S ribosome. The sequence is that of Large ribosomal subunit protein uL22 from Hahella chejuensis (strain KCTC 2396).